The chain runs to 183 residues: Shikimate kinase (183 aa).

Gly-15–Thr-20 is an ATP binding site. Ser-19 provides a ligand contact to Mg(2+). Substrate contacts are provided by Asp-37, Arg-61, and Gly-85. Residue Arg-123 participates in ATP binding. A substrate-binding site is contributed by Arg-142.

The protein belongs to the shikimate kinase family. As to quaternary structure, monomer. The cofactor is Mg(2+).

The protein localises to the cytoplasm. It carries out the reaction shikimate + ATP = 3-phosphoshikimate + ADP + H(+). It participates in metabolic intermediate biosynthesis; chorismate biosynthesis; chorismate from D-erythrose 4-phosphate and phosphoenolpyruvate: step 5/7. Functionally, catalyzes the specific phosphorylation of the 3-hydroxyl group of shikimic acid using ATP as a cosubstrate. In Paracidovorax citrulli (strain AAC00-1) (Acidovorax citrulli), this protein is Shikimate kinase.